A 349-amino-acid chain; its full sequence is uncharacterized protein (349 aa).

A helical membrane pass occupies residues 17–37 (VIAIVSTGLVFAMTLVLTGLV). The interval 111–131 (FGAPEHGPGMPRVSDGRAPST) is disordered. 3 helical membrane passes run 230-250 (AITV…GSVV), 284-304 (VVAL…APLF), and 308-328 (VVVP…IGLL).

It belongs to the ABC-4 integral membrane protein family.

It localises to the cell membrane. This is an uncharacterized protein from Mycobacterium bovis (strain ATCC BAA-935 / AF2122/97).